The chain runs to 382 residues: Galactokinase (382 aa).

34–37 (EHTD) serves as a coordination point for substrate. An ATP-binding site is contributed by 124–130 (GAGLSSS). Positions 130 and 162 each coordinate Mg(2+). The Proton acceptor role is filled by Asp-174. Position 223 (Tyr-223) interacts with substrate.

The protein belongs to the GHMP kinase family. GalK subfamily.

It localises to the cytoplasm. It carries out the reaction alpha-D-galactose + ATP = alpha-D-galactose 1-phosphate + ADP + H(+). It participates in carbohydrate metabolism; galactose metabolism. Its function is as follows. Catalyzes the transfer of the gamma-phosphate of ATP to D-galactose to form alpha-D-galactose-1-phosphate (Gal-1-P). This Escherichia coli O81 (strain ED1a) protein is Galactokinase.